A 403-amino-acid polypeptide reads, in one-letter code: Imidazolonepropionase (403 aa).

Residues H69 and H71 each coordinate Fe(3+). H69 and H71 together coordinate Zn(2+). 4-imidazolone-5-propanoate-binding residues include R78, Y141, and H174. Y141 serves as a coordination point for N-formimidoyl-L-glutamate. Position 239 (H239) interacts with Fe(3+). Position 239 (H239) interacts with Zn(2+). Q242 is a binding site for 4-imidazolone-5-propanoate. D314 is a Fe(3+) binding site. Zn(2+) is bound at residue D314. Residues N316 and G318 each contribute to the N-formimidoyl-L-glutamate site. S319 contributes to the 4-imidazolone-5-propanoate binding site.

The protein belongs to the metallo-dependent hydrolases superfamily. HutI family. Zn(2+) serves as cofactor. The cofactor is Fe(3+).

It is found in the cytoplasm. It catalyses the reaction 4-imidazolone-5-propanoate + H2O = N-formimidoyl-L-glutamate. It functions in the pathway amino-acid degradation; L-histidine degradation into L-glutamate; N-formimidoyl-L-glutamate from L-histidine: step 3/3. Functionally, catalyzes the hydrolytic cleavage of the carbon-nitrogen bond in imidazolone-5-propanoate to yield N-formimidoyl-L-glutamate. It is the third step in the universal histidine degradation pathway. The sequence is that of Imidazolonepropionase from Legionella pneumophila (strain Lens).